The chain runs to 362 residues: Phosphatidylserine decarboxylase proenzyme (362 aa).

The helical transmembrane segment at 26-44 (YLLTGVTILSFIFMFQYKY) threads the bilayer. Catalysis depends on charge relay system; for autoendoproteolytic cleavage activity residues aspartate 147, histidine 206, and serine 316. Serine 316 acts as the Schiff-base intermediate with substrate; via pyruvic acid; for decarboxylase activity in catalysis. A Pyruvic acid (Ser); by autocatalysis modification is found at serine 316.

It belongs to the phosphatidylserine decarboxylase family. PSD-B subfamily. Eukaryotic type I sub-subfamily. Heterodimer of a large membrane-associated beta subunit and a small pyruvoyl-containing alpha subunit. Pyruvate serves as cofactor. Is synthesized initially as an inactive proenzyme. Formation of the active enzyme involves a self-maturation process in which the active site pyruvoyl group is generated from an internal serine residue via an autocatalytic post-translational modification. Two non-identical subunits are generated from the proenzyme in this reaction, and the pyruvate is formed at the N-terminus of the alpha chain, which is derived from the carboxyl end of the proenzyme. The autoendoproteolytic cleavage occurs by a canonical serine protease mechanism, in which the side chain hydroxyl group of the serine supplies its oxygen atom to form the C-terminus of the beta chain, while the remainder of the serine residue undergoes an oxidative deamination to produce ammonia and the pyruvoyl prosthetic group on the alpha chain. During this reaction, the Ser that is part of the protease active site of the proenzyme becomes the pyruvoyl prosthetic group, which constitutes an essential element of the active site of the mature decarboxylase.

Its subcellular location is the endoplasmic reticulum membrane. The catalysed reaction is a 1,2-diacyl-sn-glycero-3-phospho-L-serine + H(+) = a 1,2-diacyl-sn-glycero-3-phosphoethanolamine + CO2. The protein operates within phospholipid metabolism; phosphatidylethanolamine biosynthesis; phosphatidylethanolamine from CDP-diacylglycerol: step 2/2. Its function is as follows. Catalyzes the formation of phosphatidylethanolamine (PtdEtn) from phosphatidylserine (PtdSer). Plays a central role in phospholipid metabolism and in the interorganelle trafficking of phosphatidylserine. In Plasmodium falciparum, this protein is Phosphatidylserine decarboxylase proenzyme.